A 375-amino-acid chain; its full sequence is Putative type I specificity subunit S.MpnORF638P (375 aa).

This sequence belongs to the type-I restriction system S methylase family. The methyltransferase is composed of M and S polypeptides.

The specificity (S) subunit of a type I methyltransferase (MTase); this subunit dictates DNA sequence specificity. The single R subunit has multiple frameshifts and is probably not expressed. The sequence is that of Putative type I specificity subunit S.MpnORF638P from Mycoplasma pneumoniae (strain ATCC 29342 / M129 / Subtype 1) (Mycoplasmoides pneumoniae).